The chain runs to 909 residues: DNA mismatch repair protein MutS (909 aa).

Residues 275–290 (QKAERPPLSRPEREEQ) are compositionally biased toward basic and acidic residues. The tract at residues 275–295 (QKAERPPLSRPEREEQGSTLF) is disordered. Residue 661 to 668 (GPNMGGKS) participates in ATP binding.

The protein belongs to the DNA mismatch repair MutS family.

Its function is as follows. This protein is involved in the repair of mismatches in DNA. It is possible that it carries out the mismatch recognition step. This protein has a weak ATPase activity. This is DNA mismatch repair protein MutS from Mesorhizobium japonicum (strain LMG 29417 / CECT 9101 / MAFF 303099) (Mesorhizobium loti (strain MAFF 303099)).